The following is a 181-amino-acid chain: Protein Syd (181 aa).

Belongs to the Syd family.

It is found in the cell inner membrane. Its function is as follows. Interacts with the SecY protein in vivo. May bind preferentially to an uncomplexed state of SecY, thus functioning either as a chelating agent for excess SecY in the cell or as a regulatory factor that negatively controls the translocase function. This chain is Protein Syd, found in Alteromonas mediterranea (strain DSM 17117 / CIP 110805 / LMG 28347 / Deep ecotype).